We begin with the raw amino-acid sequence, 462 residues long: Cysteine--tRNA ligase (462 aa).

Cys-29 contributes to the Zn(2+) binding site. The 'HIGH' region signature appears at 31 to 41 (MTVYDLCHLGH). Zn(2+) contacts are provided by Cys-217, His-242, and Glu-246. The 'KMSKS' region motif lies at 274–278 (KMSKS). An ATP-binding site is contributed by Lys-277.

Belongs to the class-I aminoacyl-tRNA synthetase family. Monomer. It depends on Zn(2+) as a cofactor.

The protein resides in the cytoplasm. The enzyme catalyses tRNA(Cys) + L-cysteine + ATP = L-cysteinyl-tRNA(Cys) + AMP + diphosphate. The protein is Cysteine--tRNA ligase of Polaromonas sp. (strain JS666 / ATCC BAA-500).